The primary structure comprises 501 residues: MTNHSVILCILDGWGNNKNSQFNAIAQADTPYWDSIISQYPQSNIVTHGPDVGLPDRQIGNSEVGHISLGSGRIVLQDLCRINEEIKNIRKNTHLLEFTEQIKRNNGICHIAGLLSDGGIHSSLSHMLDIIDALSYLKIQVVIHIFLDGRDTPPISALKYINILCSHIKDLNNVSIATISGRYYSMDRDNRLDRTTKAYNSIAFGDGKRYEEPISAVQDNYNAGITDEFIIPCVIGNYQGMNPTDGFIMTNFRSDRVIQILKMITEDQNTNHITLKNTIGMIKYSNELNIPCLFPNKKISNTLGEIISNQQLHQLRIAETEKYAHVTFFFNGGREEVFENEERIIIPSPSVTTYDLVPEMSAYEITDTLIKKINLQKYSLIIINYANADMVGHTGNIEATKKAITTLDQCLGKILKCIHNTNYILVITADHGNAEEMFDVQNNMPYTAHTLNPVPFVVCNYPKKIKLKNGRLSDVAPTILEILNIKQPEEMTGISLIDTSN.

Mn(2+) contacts are provided by Asp12 and Ser62. Catalysis depends on Ser62, which acts as the Phosphoserine intermediate. Substrate-binding positions include His121, 150–151 (RD), Arg182, Arg188, 253–256 (RSDR), and Lys322. Residues Asp389, His393, Asp430, His431, and His449 each coordinate Mn(2+).

This sequence belongs to the BPG-independent phosphoglycerate mutase family. In terms of assembly, monomer. The cofactor is Mn(2+).

The catalysed reaction is (2R)-2-phosphoglycerate = (2R)-3-phosphoglycerate. It participates in carbohydrate degradation; glycolysis; pyruvate from D-glyceraldehyde 3-phosphate: step 3/5. Its function is as follows. Catalyzes the interconversion of 2-phosphoglycerate and 3-phosphoglycerate. This is 2,3-bisphosphoglycerate-independent phosphoglycerate mutase from Ehrlichia ruminantium (strain Gardel).